A 1772-amino-acid polypeptide reads, in one-letter code: Merozoite surface protein 1 (1772 aa).

A signal peptide spans 1-18; sequence MKVIGLLFSFVFFAIKCK. The N-linked (GlcNAc...) asparagine glycan is linked to N54. Residues 290 to 319 form a disordered region; sequence TGGQSSTEPGSGGSSASGTSSSGQASAGTG. Low complexity predominate over residues 305–319; the sequence is ASGTSSSGQASAGTG. 2 N-linked (GlcNAc...) asparagine glycosylation sites follow: N406 and N646. The interval 703 to 796 is disordered; it reads KERMEQGPAI…QPSQAASSTT (94 aa). Low complexity predominate over residues 724–796; sequence SAESSTDRST…QPSQAASSTT (73 aa). N829 is a glycosylation site (N-linked (GlcNAc...) asparagine). The tract at residues 924-1070 is disordered; sequence AAPTPVTPAA…SRAESEEDMP (147 aa). Composition is skewed to low complexity over residues 930–946 and 956–1052; these read TPAA…PDVQ and SQQP…NSQS. N-linked (GlcNAc...) asparagine glycans are attached at residues N1018 and N1090. The tract at residues 1362-1383 is disordered; the sequence is GAVPGSGTDTRVAGSSVDDNED. N-linked (GlcNAc...) asparagine glycosylation is found at N1408, N1446, N1541, and N1629. 2 EGF-like domains span residues 1661–1703 and 1704–1752; these read HVCV…VENN and NPTC…FCSS. A disulfide bond links C1663 and C1675. N-linked (GlcNAc...) asparagine glycosylation occurs at N1680. 4 disulfides stabilise this stretch: C1687-C1699, C1707-C1720, C1714-C1734, and C1736-C1750. S1751 carries the GPI-anchor amidated serine lipid modification. The propeptide at 1752–1772 is removed in mature form; the sequence is SSSFMGLSILLIITLIVFNIF.

As to quaternary structure, forms a complex composed of subunits p83, p30, p38, and p42 which remain non-covalently associated; the complex is formed at the merozoite surface prior to egress from host erythrocytes. Post-translationally, the p230 precursor is cleaved by SUB1 prior to merozoite egress into 4 subunits p83, p30, p38, and p42 which remain non-covalently associated. In a second processing step during erythrocyte invasion, p42 is cleaved by SUB2 into p33 and p19; the latter remains attached to the merozoite surface via its GPI-anchor and stays on the surface during the subsequent ring stage.

It localises to the cell membrane. The protein resides in the secreted. Its function is as follows. During the asexual blood stage, involved in merozoite egress from host erythrocytes possibly via its interaction with the host cytoskeleton protein spectrin resulting in the destabilization of the host cytoskeleton and thus leading to erythrocyte cell membrane rupture. Involved in the binding to host erythrocytes and is required for host erythrocyte invasion. This is Merozoite surface protein 1 from Plasmodium yoelii yoelii.